Consider the following 475-residue polypeptide: Trifunctional enzyme subunit beta, mitochondrial (475 aa).

The transit peptide at 1–34 directs the protein to the mitochondrion; the sequence is MISLLTYTLKNLPNTSKWALRFCMRPLSSSSQLQ. Position 73 is an N6-acetyllysine; alternate (K73). The residue at position 73 (K73) is an N6-succinyllysine; alternate. C139 serves as the catalytic Acyl-thioester intermediate. An intramembrane segment occupies 174–221; it reads IRHSRKMRKMMLDLNKAKTLAQRLSIISKFRLNFLSPELPAVSEFSTS. N6-acetyllysine; alternate is present on K189. Residue K189 is modified to N6-succinyllysine; alternate. N6-succinyllysine occurs at positions 191 and 292. Position 294 is an N6-acetyllysine; alternate (K294). K294 bears the N6-succinyllysine; alternate mark. Residue K299 is modified to N6-acetyllysine. K333 is modified (N6-acetyllysine; alternate). An N6-succinyllysine; alternate modification is found at K333. Residues K349 and K362 each carry the N6-acetyllysine modification. C459 acts as the Proton donor/acceptor in catalysis.

Belongs to the thiolase-like superfamily. Thiolase family. As to quaternary structure, heterotetramer of 2 alpha/HADHA and 2 beta/HADHB subunits; forms the mitochondrial trifunctional enzyme. Also purified as higher order heterooligomers including a 4 alpha/HADHA and 4 beta/HADHB heterooligomer which physiological significance remains unclear. The mitochondrial trifunctional enzyme interacts with MTLN. Interacts with RSAD2/viperin.

It is found in the mitochondrion. The protein resides in the mitochondrion inner membrane. The protein localises to the mitochondrion outer membrane. It localises to the endoplasmic reticulum. It catalyses the reaction an acyl-CoA + acetyl-CoA = a 3-oxoacyl-CoA + CoA. The catalysed reaction is butanoyl-CoA + acetyl-CoA = 3-oxohexanoyl-CoA + CoA. It carries out the reaction hexanoyl-CoA + acetyl-CoA = 3-oxooctanoyl-CoA + CoA. The enzyme catalyses octanoyl-CoA + acetyl-CoA = 3-oxodecanoyl-CoA + CoA. It catalyses the reaction decanoyl-CoA + acetyl-CoA = 3-oxododecanoyl-CoA + CoA. The catalysed reaction is dodecanoyl-CoA + acetyl-CoA = 3-oxotetradecanoyl-CoA + CoA. It carries out the reaction tetradecanoyl-CoA + acetyl-CoA = 3-oxohexadecanoyl-CoA + CoA. The protein operates within lipid metabolism; fatty acid beta-oxidation. Mitochondrial trifunctional enzyme catalyzes the last three of the four reactions of the mitochondrial beta-oxidation pathway. The mitochondrial beta-oxidation pathway is the major energy-producing process in tissues and is performed through four consecutive reactions breaking down fatty acids into acetyl-CoA. Among the enzymes involved in this pathway, the trifunctional enzyme exhibits specificity for long-chain fatty acids. Mitochondrial trifunctional enzyme is a heterotetrameric complex composed of two proteins, the trifunctional enzyme subunit alpha/HADHA carries the 2,3-enoyl-CoA hydratase and the 3-hydroxyacyl-CoA dehydrogenase activities, while the trifunctional enzyme subunit beta/HADHB described here bears the 3-ketoacyl-CoA thiolase activity. This is Trifunctional enzyme subunit beta, mitochondrial (HADHB) from Bos taurus (Bovine).